A 356-amino-acid chain; its full sequence is L-lactate dehydrogenase A (356 aa).

Residues 75 to 80 (DALPDK) and Arg-121 each bind NAD(+). 3 residues coordinate substrate: Arg-128, Asn-160, and Arg-191. NAD(+) is bound at residue Asn-160. His-215 acts as the Proton acceptor in catalysis. Substrate is bound at residue Thr-270.

This sequence belongs to the LDH/MDH superfamily. LDH family. As to quaternary structure, tetramer that arise from random association of LDH-A and LDH-B.

The catalysed reaction is (S)-lactate + NAD(+) = pyruvate + NADH + H(+). Its pathway is fermentation; pyruvate fermentation to lactate; (S)-lactate from pyruvate: step 1/1. The polypeptide is L-lactate dehydrogenase A (Hordeum vulgare (Barley)).